Consider the following 266-residue polypeptide: MLKYCAEIWDEVRNRRPLVHCITNYVTVNDVANIILAAGASPAMVEYPAEASGFAPLASVLYFNLGTLTGEQEAAMLEGRWAAASRDVPLILDPVACGVIGRKVDLIERIKSLGKIQVLKGNIAEIKSLAGLAGKAQGVDSLDTGEGLEEACLQLAVKDKLIAVATGEVDIVAEENRYARIFNGTPLFQNITGAGCMAGGVIAACVGAAPEEAWLASITGLLAFNLAGERAASQAGNRPGTFRTLLFDELFVLRGEELMKEGRLEW.

A substrate-binding site is contributed by Met-44. ATP is bound by residues Lys-120 and Thr-166. A substrate-binding site is contributed by Gly-193.

It belongs to the Thz kinase family. Mg(2+) is required as a cofactor.

The enzyme catalyses 5-(2-hydroxyethyl)-4-methylthiazole + ATP = 4-methyl-5-(2-phosphooxyethyl)-thiazole + ADP + H(+). It functions in the pathway cofactor biosynthesis; thiamine diphosphate biosynthesis; 4-methyl-5-(2-phosphoethyl)-thiazole from 5-(2-hydroxyethyl)-4-methylthiazole: step 1/1. Its function is as follows. Catalyzes the phosphorylation of the hydroxyl group of 4-methyl-5-beta-hydroxyethylthiazole (THZ). The chain is Hydroxyethylthiazole kinase from Syntrophomonas wolfei subsp. wolfei (strain DSM 2245B / Goettingen).